A 985-amino-acid chain; its full sequence is Tudor domain-containing protein 5 (985 aa).

Positions 7 to 80 (VQECLRKEIR…DGTIILRAIP (74 aa)) constitute an HTH OST-type 1 domain. The segment at 98–119 (HKVRNSMQKGRPSVCSGSSSRR) is disordered. Positions 107 to 116 (GRPSVCSGSS) are enriched in low complexity. HTH OST-type domains are found at residues 127-202 (VPPI…LKRS) and 300-374 (INPE…FDAN). The region spanning 530 to 589 (FIQPGHLCCVRISEDKWWYRVIIHRVLGKQEVEVFYPDFGNIGTVQKSSLRFLKWCYTKL) is the Tudor domain. 2 disordered regions span residues 818 to 846 (EELS…DSPT) and 889 to 915 (STTP…LKND). The span at 823 to 845 (QEKNIGTTRSQKQPNLESSSDSP) shows a compositional bias: polar residues. Ser-897 carries the phosphoserine modification. The span at 904-915 (SVESSPESLKND) shows a compositional bias: polar residues.

Belongs to the TDRD5 family.

It is found in the cytoplasm. In terms of biological role, required during spermiogenesis to participate in the repression transposable elements and prevent their mobilization, which is essential for the germline integrity. Probably acts via the piRNA metabolic process, which mediates the repression of transposable elements during meiosis by forming complexes composed of piRNAs and Piwi proteins and govern the methylation and subsequent repression of transposons. Required for chromatoid body (CB) assembly. This chain is Tudor domain-containing protein 5 (TDRD5), found in Canis lupus familiaris (Dog).